The following is a 38-amino-acid chain: Photosystem II reaction center protein L (38 aa).

A helical membrane pass occupies residues 17 to 37 (SLYWGLLLIFVLAVLFSNYFF).

The protein belongs to the PsbL family. PSII is composed of 1 copy each of membrane proteins PsbA, PsbB, PsbC, PsbD, PsbE, PsbF, PsbH, PsbI, PsbJ, PsbK, PsbL, PsbM, PsbT, PsbX, PsbY, PsbZ, Psb30/Ycf12, at least 3 peripheral proteins of the oxygen-evolving complex and a large number of cofactors. It forms dimeric complexes.

The protein resides in the plastid. Its subcellular location is the chloroplast thylakoid membrane. In terms of biological role, one of the components of the core complex of photosystem II (PSII). PSII is a light-driven water:plastoquinone oxidoreductase that uses light energy to abstract electrons from H(2)O, generating O(2) and a proton gradient subsequently used for ATP formation. It consists of a core antenna complex that captures photons, and an electron transfer chain that converts photonic excitation into a charge separation. This subunit is found at the monomer-monomer interface and is required for correct PSII assembly and/or dimerization. This is Photosystem II reaction center protein L from Adiantum capillus-veneris (Maidenhair fern).